Here is a 94-residue protein sequence, read N- to C-terminus: MSKCSADETPVCCCMDVGTIMDNSDCTASYSRVFANRAEAEQTLAALTEKARSVESEPCKITPTFTEESDGVRLDIDFTFACEAEMLIFQLGLR.

The protein belongs to the UPF0381 family.

The polypeptide is UPF0381 protein YfcZ (yfcZ) (Escherichia coli O6:H1 (strain CFT073 / ATCC 700928 / UPEC)).